A 129-amino-acid chain; its full sequence is Basic blue protein (129 aa).

The N-terminal stretch at 1-33 (MAKGRGSASWSARAIVTLMAVSVLLLQADYVQA) is a signal peptide. Residues 34-129 (ATYTVGDSGI…SDMKIAVTAV (96 aa)) form the Phytocyanin domain. Residues His-72, Cys-112, His-117, and Met-122 each coordinate Cu cation. A disulfide bond links Cys-85 and Cys-118.

Expressed in the inflorescence and in the transmitting tract of the pistil. Detected in roots, stems, cauline leaves, cotyledons, hypocotyls, guard cells, pistils, sepals, stamen filaments and vascular bundles of roots but not of leaves. Not expressed in petals, anthers or pollen.

Its subcellular location is the secreted. The protein localises to the extracellular space. It localises to the extracellular matrix. Functionally, forms a concentration gradient along the pollen tube growth path, with a lower level in the stigma papilla cell wall and a higher level in the transmitting tract extracellular matix of the style. This is Basic blue protein (ARPN) from Arabidopsis thaliana (Mouse-ear cress).